The chain runs to 622 residues: Low affinity potassium transport system protein Kup (622 aa).

The next 12 membrane-spanning stretches (helical) occupy residues 9-29 (LSAVTLAAIGVVYGDIGTSPL), 46-66 (PDVVFGFLSLIFWMLILVVSV), 101-121 (ILVVLGLIGGSFFYGEVVITP), 137-157 (PALDPYIVPCSIAVLTLLFVI), 165-185 (VGKLFAPVMLVWFLTLALLGL), 213-233 (VSFFALGAVVLAITGVEALYA), 247-267 (WFTVVLPSLVLNYFGQGALLL), 276-296 (PFFLLAPDWALIPLLILATLA), 337-357 (IYIPVINWTLYLAVVLVIIGF), 363-383 (LAAAYGIAVTGTMVITSILFC), 395-415 (FLVVFLLMVLLIIDIPMFSAN), and 416-436 (VLKLFSGGWLPLSLGLVMFII).

This sequence belongs to the HAK/KUP transporter (TC 2.A.72) family.

Its subcellular location is the cell inner membrane. The enzyme catalyses K(+)(in) + H(+)(in) = K(+)(out) + H(+)(out). Responsible for the low-affinity transport of potassium into the cell. Likely operates as a K(+):H(+) symporter. The polypeptide is Low affinity potassium transport system protein Kup (Yersinia pestis bv. Antiqua (strain Antiqua)).